A 121-amino-acid chain; its full sequence is Small ribosomal subunit protein uS13 (121 aa).

A disordered region spans residues 94-121; the sequence is GLPVRGQNTKNNARTRKGPRRTVANKKK. Over residues 106–121 the composition is skewed to basic residues; the sequence is ARTRKGPRRTVANKKK.

The protein belongs to the universal ribosomal protein uS13 family. In terms of assembly, part of the 30S ribosomal subunit. Forms a loose heterodimer with protein S19. Forms two bridges to the 50S subunit in the 70S ribosome.

Functionally, located at the top of the head of the 30S subunit, it contacts several helices of the 16S rRNA. In the 70S ribosome it contacts the 23S rRNA (bridge B1a) and protein L5 of the 50S subunit (bridge B1b), connecting the 2 subunits; these bridges are implicated in subunit movement. Contacts the tRNAs in the A and P-sites. This Geobacillus kaustophilus (strain HTA426) protein is Small ribosomal subunit protein uS13.